We begin with the raw amino-acid sequence, 154 residues long: Ribonuclease H (154 aa).

An RNase H type-1 domain is found at 1-142 (MKQVDIFTDG…CDTIARGHAS (142 aa)). Asp9, Glu47, Asp69, and Asp134 together coordinate Mg(2+).

It belongs to the RNase H family. In terms of assembly, monomer. It depends on Mg(2+) as a cofactor.

The protein resides in the cytoplasm. The catalysed reaction is Endonucleolytic cleavage to 5'-phosphomonoester.. Its function is as follows. Endonuclease that specifically degrades the RNA of RNA-DNA hybrids. This chain is Ribonuclease H, found in Oleidesulfovibrio alaskensis (strain ATCC BAA-1058 / DSM 17464 / G20) (Desulfovibrio alaskensis).